The primary structure comprises 92 residues: Small ribosomal subunit protein uS19 (92 aa).

The protein belongs to the universal ribosomal protein uS19 family.

Its function is as follows. Protein S19 forms a complex with S13 that binds strongly to the 16S ribosomal RNA. The chain is Small ribosomal subunit protein uS19 from Pectobacterium atrosepticum (strain SCRI 1043 / ATCC BAA-672) (Erwinia carotovora subsp. atroseptica).